A 260-amino-acid polypeptide reads, in one-letter code: MELLQVTILFLLPSICSSNSTGVLEAANNSLVVTTIKTSITTPNTESLQKNVITPTTGTTPKGKITNELLKMSLMSAVTLTSKDEGLKVTTTDVRKNESIVSNVTVTIVTLPNAVSTLQSSKPKTETQSSIKTTEIPGSILQPDASPSETGTLSSIPVTIPENTSQSQVIGTEGGKNASTSATSRSYSSIILPVVIALIVITLSVFVLVGLYRMCWKADPGTPENGNDQPQSDKESVKLLTVKTISHESGEHSAQGKTKN.

The N-terminal stretch at 1–18 (MELLQVTILFLLPSICSS) is a signal peptide. N-linked (GlcNAc...) asparagine glycans are attached at residues N19, N28, N97, and N103. Over 19–189 (NSTGVLEAAN…TSATSRSYSS (171 aa)) the chain is Extracellular. 2 stretches are compositionally biased toward polar residues: residues 119–133 (QSSK…SIKT) and 145–170 (ASPS…SQVI). The disordered stretch occupies residues 119–182 (QSSKPKTETQ…EGGKNASTSA (64 aa)). 2 N-linked (GlcNAc...) asparagine glycosylation sites follow: N163 and N177. The helical transmembrane segment at 190-210 (IILPVVIALIVITLSVFVLVG) threads the bilayer. The Cytoplasmic segment spans residues 211 to 260 (LYRMCWKADPGTPENGNDQPQSDKESVKLLTVKTISHESGEHSAQGKTKN). S236 carries the phosphoserine modification.

Highly O-glycosylated. Sialic acid-rich glycoprotein.

It is found in the membrane. Endothelial sialomucin, also called endomucin or mucin-like sialoglycoprotein, which interferes with the assembly of focal adhesion complexes and inhibits interaction between cells and the extracellular matrix. The polypeptide is Endomucin (EMCN) (Pongo abelii (Sumatran orangutan)).